Consider the following 524-residue polypeptide: CTP synthase (524 aa).

Residues 1–263 form an amidoligase domain region; that stretch reads MKKYVIVTGG…HEKIASKLNV (263 aa). Residue S13 participates in CTP binding. S13 serves as a coordination point for UTP. Residues 14 to 19 and D71 contribute to the ATP site; that span reads GIGKGI. Positions 71 and 137 each coordinate Mg(2+). CTP-binding positions include 144 to 146, 184 to 189, and K220; these read DIE and KTKPTQ. UTP-binding positions include 184–189 and K220; that span reads KTKPTQ. A Glutamine amidotransferase type-1 domain is found at 282–524; sequence RIALVGKYLG…YLRKVLEGSQ (243 aa). An L-glutamine-binding site is contributed by G342. The active-site Nucleophile; for glutamine hydrolysis is C369. Residues 370–373, E393, and R451 each bind L-glutamine; that span reads LGMQ. Active-site residues include H499 and E501.

It belongs to the CTP synthase family. As to quaternary structure, homotetramer.

The enzyme catalyses UTP + L-glutamine + ATP + H2O = CTP + L-glutamate + ADP + phosphate + 2 H(+). The catalysed reaction is L-glutamine + H2O = L-glutamate + NH4(+). It catalyses the reaction UTP + NH4(+) + ATP = CTP + ADP + phosphate + 2 H(+). The protein operates within pyrimidine metabolism; CTP biosynthesis via de novo pathway; CTP from UDP: step 2/2. Its activity is regulated as follows. Allosterically activated by GTP, when glutamine is the substrate; GTP has no effect on the reaction when ammonia is the substrate. The allosteric effector GTP functions by stabilizing the protein conformation that binds the tetrahedral intermediate(s) formed during glutamine hydrolysis. Inhibited by the product CTP, via allosteric rather than competitive inhibition. Functionally, catalyzes the ATP-dependent amination of UTP to CTP with either L-glutamine or ammonia as the source of nitrogen. Regulates intracellular CTP levels through interactions with the four ribonucleotide triphosphates. The sequence is that of CTP synthase from Thermotoga maritima (strain ATCC 43589 / DSM 3109 / JCM 10099 / NBRC 100826 / MSB8).